Here is a 295-residue protein sequence, read N- to C-terminus: ATP synthase gamma chain (295 aa).

Belongs to the ATPase gamma chain family. F-type ATPases have 2 components, CF(1) - the catalytic core - and CF(0) - the membrane proton channel. CF(1) has five subunits: alpha(3), beta(3), gamma(1), delta(1), epsilon(1). CF(0) has three main subunits: a, b and c.

The protein localises to the cell inner membrane. Functionally, produces ATP from ADP in the presence of a proton gradient across the membrane. The gamma chain is believed to be important in regulating ATPase activity and the flow of protons through the CF(0) complex. This chain is ATP synthase gamma chain, found in Paraburkholderia phymatum (strain DSM 17167 / CIP 108236 / LMG 21445 / STM815) (Burkholderia phymatum).